Reading from the N-terminus, the 447-residue chain is UDP-N-acetylmuramate--L-alanine ligase (447 aa).

Residue 108-114 (GSHGKTS) participates in ATP binding.

This sequence belongs to the MurCDEF family.

It is found in the cytoplasm. The catalysed reaction is UDP-N-acetyl-alpha-D-muramate + L-alanine + ATP = UDP-N-acetyl-alpha-D-muramoyl-L-alanine + ADP + phosphate + H(+). It participates in cell wall biogenesis; peptidoglycan biosynthesis. In terms of biological role, cell wall formation. The protein is UDP-N-acetylmuramate--L-alanine ligase of Listeria welshimeri serovar 6b (strain ATCC 35897 / DSM 20650 / CCUG 15529 / CIP 8149 / NCTC 11857 / SLCC 5334 / V8).